Here is a 281-residue protein sequence, read N- to C-terminus: Elongation factor Ts (281 aa).

Residues 86-89 (TDFV) form an involved in Mg(2+) ion dislocation from EF-Tu region.

This sequence belongs to the EF-Ts family.

Its subcellular location is the cytoplasm. In terms of biological role, associates with the EF-Tu.GDP complex and induces the exchange of GDP to GTP. It remains bound to the aminoacyl-tRNA.EF-Tu.GTP complex up to the GTP hydrolysis stage on the ribosome. This chain is Elongation factor Ts, found in Beutenbergia cavernae (strain ATCC BAA-8 / DSM 12333 / CCUG 43141 / JCM 11478 / NBRC 16432 / NCIMB 13614 / HKI 0122).